A 662-amino-acid polypeptide reads, in one-letter code: Glycogen debranching enzyme (662 aa).

The active-site Nucleophile is Asp338. The active-site Proton donor is the Glu373.

The protein belongs to the glycosyl hydrolase 13 family.

The catalysed reaction is Hydrolysis of (1-&gt;6)-alpha-D-glucosidic linkages to branches with degrees of polymerization of three or four glucose residues in limit dextrin.. It functions in the pathway glycan degradation; glycogen degradation. Its function is as follows. Removes maltotriose and maltotetraose chains that are attached by 1,6-alpha-linkage to the limit dextrin main chain, generating a debranched limit dextrin. The protein is Glycogen debranching enzyme of Yersinia enterocolitica serotype O:8 / biotype 1B (strain NCTC 13174 / 8081).